The primary structure comprises 314 residues: Protoheme IX farnesyltransferase (314 aa).

7 consecutive transmembrane segments (helical) span residues 58 to 78 (LWLVVATVVGGAFSAGSASVF), 107 to 127 (AALVFGFVLGILSTVILYVWV), 130 to 150 (LSAALSVAANAFYVLVYTMLL), 173 to 193 (WTAVTGSLSWVPVVLFAVVFF), 227 to 247 (VGRQVVIYSWVMVATSLLLWP), 248 to 268 (VAGTGIFYPIAAGVLGAVFLL), and 294 to 314 (SSNLYLSLLFVAVALDPLLAG).

This sequence belongs to the UbiA prenyltransferase family. Protoheme IX farnesyltransferase subfamily.

The protein resides in the cell membrane. The catalysed reaction is heme b + (2E,6E)-farnesyl diphosphate + H2O = Fe(II)-heme o + diphosphate. Its pathway is porphyrin-containing compound metabolism; heme O biosynthesis; heme O from protoheme: step 1/1. Its function is as follows. Converts heme B (protoheme IX) to heme O by substitution of the vinyl group on carbon 2 of heme B porphyrin ring with a hydroxyethyl farnesyl side group. In Nocardioides sp. (strain ATCC BAA-499 / JS614), this protein is Protoheme IX farnesyltransferase.